Consider the following 170-residue polypeptide: Peptide deformylase (170 aa).

The Fe cation site is built by cysteine 91 and histidine 133. Glutamate 134 is an active-site residue. Histidine 137 contacts Fe cation.

This sequence belongs to the polypeptide deformylase family. Requires Fe(2+) as cofactor.

It catalyses the reaction N-terminal N-formyl-L-methionyl-[peptide] + H2O = N-terminal L-methionyl-[peptide] + formate. Functionally, removes the formyl group from the N-terminal Met of newly synthesized proteins. Requires at least a dipeptide for an efficient rate of reaction. N-terminal L-methionine is a prerequisite for activity but the enzyme has broad specificity at other positions. In Aeromonas salmonicida (strain A449), this protein is Peptide deformylase.